The chain runs to 100 residues: Putative pterin-4-alpha-carbinolamine dehydratase (100 aa).

It belongs to the pterin-4-alpha-carbinolamine dehydratase family.

The enzyme catalyses (4aS,6R)-4a-hydroxy-L-erythro-5,6,7,8-tetrahydrobiopterin = (6R)-L-erythro-6,7-dihydrobiopterin + H2O. This chain is Putative pterin-4-alpha-carbinolamine dehydratase, found in Alteromonas mediterranea (strain DSM 17117 / CIP 110805 / LMG 28347 / Deep ecotype).